A 165-amino-acid polypeptide reads, in one-letter code: Destrin (165 aa).

Residue Ala-2 is modified to N-acetylalanine. The 150-residue stretch at 4–153 folds into the ADF-H domain; sequence GVQVADEVCR…NRACIAEKLG (150 aa). The Nuclear localization signal motif lies at 30 to 34; sequence KKRKK.

Belongs to the actin-binding proteins ADF family.

In terms of biological role, actin-depolymerizing protein. Severs actin filaments (F-actin) and binds to actin monomers (G-actin). Acts in a pH-independent manner. This Gallus gallus (Chicken) protein is Destrin (DSTN).